Here is a 648-residue protein sequence, read N- to C-terminus: Biosynthetic arginine decarboxylase (648 aa).

K109 carries the N6-(pyridoxal phosphate)lysine modification. 291–301 provides a ligand contact to substrate; that stretch reads IDVGGGLGIDF.

It belongs to the Orn/Lys/Arg decarboxylase class-II family. SpeA subfamily. The cofactor is Mg(2+). Pyridoxal 5'-phosphate serves as cofactor.

It catalyses the reaction L-arginine + H(+) = agmatine + CO2. Its pathway is amine and polyamine biosynthesis; agmatine biosynthesis; agmatine from L-arginine: step 1/1. Its function is as follows. Catalyzes the biosynthesis of agmatine from arginine. The sequence is that of Biosynthetic arginine decarboxylase from Prochlorococcus marinus (strain AS9601).